Consider the following 107-residue polypeptide: Essential MCU regulator, mitochondrial (107 aa).

Residues 1-47 (MASGAARWLALVRVGSGASRSWLSLRKGGDVSAGRSCSGQSLVPTRS) constitute a mitochondrion transit peptide. Residues 48-65 (VIVTRSGAILPKPVKMSF) lie on the Mitochondrial matrix side of the membrane. Residues 66–85 (GLLRVFSIVIPFLYVGTLIS) form a helical membrane-spanning segment. The short motif at 81 to 85 (GTLIS) is the GXXXX[G/A/S] element. Over 86-107 (KNFAALLEEHDIFVPEDDDDDD) the chain is Mitochondrial intermembrane.

It belongs to the SMDT1/EMRE family. In terms of assembly, component of the uniplex complex, composed of MCU, EMRE/SMDT1, MICU1 and MICU2 (or MICU3) in a 4:4:1:1 stoichiometry. The number of EMRE/SMDT1 molecules is hovewer variable, ranging from 1 to 4 copies per uniplex complex, leading to uniplex complexes with distinct gatekeeping profiles. Interacts (via its C-terminal poly-Asp tail) with MCUR1; the interaction is direct. Unprocessed form interacts (via transit peptide) with MAIP1. Post-translationally, undergoes proteolytic degradation in neurons: degraded by AFG3L2 and SPG7 before SMDT1/EMRE assembly with the uniporter complex, limiting the availability of SMDT1/EMRE for MCU assembly and promoting efficient assembly of gatekeeper subunits with MCU.

It is found in the mitochondrion inner membrane. Essential regulatory subunit of the mitochondrial calcium uniporter complex (uniplex), a complex that mediates calcium uptake into mitochondria. Required to bridge the calcium-sensing proteins MICU1 with the calcium-conducting subunit MCU. Acts by mediating activation of MCU and retention of MICU1 to the MCU pore, in order to ensure tight regulation of the uniplex complex and appropriate responses to intracellular calcium signaling. The chain is Essential MCU regulator, mitochondrial from Bos taurus (Bovine).